We begin with the raw amino-acid sequence, 95 residues long: Small ribosomal subunit protein bS6 (95 aa).

The protein belongs to the bacterial ribosomal protein bS6 family.

Binds together with bS18 to 16S ribosomal RNA. This Thermoanaerobacter pseudethanolicus (strain ATCC 33223 / 39E) (Clostridium thermohydrosulfuricum) protein is Small ribosomal subunit protein bS6.